Reading from the N-terminus, the 220-residue chain is uncharacterized protein (220 aa).

The next 4 helical transmembrane spans lie at 9 to 29 (LWIT…GSTQ), 54 to 74 (YAVH…FLAV), 105 to 125 (VQGI…IHLW), and 177 to 197 (VLAV…VIEM).

The protein localises to the cell membrane. This is an uncharacterized protein from Sinorhizobium fredii (strain NBRC 101917 / NGR234).